Here is a 171-residue protein sequence, read N- to C-terminus: Co-chaperone protein HscB (171 aa).

Residues 2 to 74 form the J domain; that stretch reads DYFTFFGLPA…LMRAEYLLSL (73 aa).

This sequence belongs to the HscB family. As to quaternary structure, interacts with HscA and stimulates its ATPase activity. Interacts with IscU.

In terms of biological role, co-chaperone involved in the maturation of iron-sulfur cluster-containing proteins. Seems to help targeting proteins to be folded toward HscA. The polypeptide is Co-chaperone protein HscB (Shigella sonnei (strain Ss046)).